Here is a 220-residue protein sequence, read N- to C-terminus: Flavin-dependent thymidylate synthase (220 aa).

A ThyX domain is found at 1–208 (MKIDILDKGF…PWTFEAFLKY (208 aa)). Residues Thr-55, 78–80 (RHR), and Glu-86 contribute to the FAD site. Residues 75-78 (QWFR), 86-90 (ELSGR), and Arg-147 contribute to the dUMP site. A ThyX motif motif is present at residues 78-88 (RHRIASYNELS). Residues 163–165 (NAR) and Asn-169 contribute to the FAD site. Arg-174 contacts dUMP. The active-site Involved in ionization of N3 of dUMP, leading to its activation is the Arg-174.

The protein belongs to the thymidylate synthase ThyX family. In terms of assembly, homotetramer. The cofactor is FAD.

It catalyses the reaction dUMP + (6R)-5,10-methylene-5,6,7,8-tetrahydrofolate + NADPH + H(+) = dTMP + (6S)-5,6,7,8-tetrahydrofolate + NADP(+). It participates in pyrimidine metabolism; dTTP biosynthesis. Its function is as follows. Catalyzes the reductive methylation of 2'-deoxyuridine-5'-monophosphate (dUMP) to 2'-deoxythymidine-5'-monophosphate (dTMP) while utilizing 5,10-methylenetetrahydrofolate (mTHF) as the methyl donor, and NADPH and FADH(2) as the reductant. The chain is Flavin-dependent thymidylate synthase from Thermotoga sp. (strain RQ2).